Here is a 257-residue protein sequence, read N- to C-terminus: Cytochrome c oxidase subunit 3 (257 aa).

6 helical membrane-spanning segments follow: residues 15-35, 82-102, 124-144, 156-176, 194-214, and 235-255; these read PWPL…VKWF, GMIL…WGFF, FLSA…VTWA, CLQG…LQGL, FFLA…FLMI, and AWYW…IYWW.

The protein belongs to the cytochrome c oxidase subunit 3 family. As to quaternary structure, component of the cytochrome c oxidase (complex IV, CIV), a multisubunit enzyme composed of a catalytic core of 3 subunits and several supernumerary subunits. The complex exists as a monomer or a dimer and forms supercomplexes (SCs) in the inner mitochondrial membrane with ubiquinol-cytochrome c oxidoreductase (cytochrome b-c1 complex, complex III, CIII).

Its subcellular location is the mitochondrion inner membrane. The catalysed reaction is 4 Fe(II)-[cytochrome c] + O2 + 8 H(+)(in) = 4 Fe(III)-[cytochrome c] + 2 H2O + 4 H(+)(out). In terms of biological role, component of the cytochrome c oxidase, the last enzyme in the mitochondrial electron transport chain which drives oxidative phosphorylation. The respiratory chain contains 3 multisubunit complexes succinate dehydrogenase (complex II, CII), ubiquinol-cytochrome c oxidoreductase (cytochrome b-c1 complex, complex III, CIII) and cytochrome c oxidase (complex IV, CIV), that cooperate to transfer electrons derived from NADH and succinate to molecular oxygen, creating an electrochemical gradient over the inner membrane that drives transmembrane transport and the ATP synthase. Cytochrome c oxidase is the component of the respiratory chain that catalyzes the reduction of oxygen to water. Electrons originating from reduced cytochrome c in the intermembrane space (IMS) are transferred via the dinuclear copper A center (CU(A)) of subunit 2 and heme A of subunit 1 to the active site in subunit 1, a binuclear center (BNC) formed by heme A3 and copper B (CU(B)). The BNC reduces molecular oxygen to 2 water molecules using 4 electrons from cytochrome c in the IMS and 4 protons from the mitochondrial matrix. The chain is Cytochrome c oxidase subunit 3 (COIII) from Artemia franciscana (Brine shrimp).